The following is a 327-amino-acid chain: Ribosomal RNA large subunit methyltransferase F (327 aa).

Positions 1 to 31 (MTHPVTPKNTTRPTPANKPAASTLHPRNPHQ) are disordered.

It belongs to the methyltransferase superfamily. METTL16/RlmF family.

Its subcellular location is the cytoplasm. It carries out the reaction adenosine(1618) in 23S rRNA + S-adenosyl-L-methionine = N(6)-methyladenosine(1618) in 23S rRNA + S-adenosyl-L-homocysteine + H(+). In terms of biological role, specifically methylates the adenine in position 1618 of 23S rRNA. This chain is Ribosomal RNA large subunit methyltransferase F, found in Psychrobacter sp. (strain PRwf-1).